The sequence spans 414 residues: Proton/glutamate-aspartate symporter (414 aa).

Over 1-3 (MKK) the chain is Cytoplasmic. Residues 4-24 (LIAFQILIALAVGAVIGHFFP) traverse the membrane as a helical segment. Topologically, residues 25 to 42 (DFGMALRPVGDGFIRLIK) are extracellular. Residues 43–63 (MIVVPIVFSTIVIGAAGSGSM) traverse the membrane as a helical segment. Residues 64 to 73 (KKMGSLGIKT) lie on the Cytoplasmic side of the membrane. Residues 74-94 (IIWFEVITTLVLGLGLLLANV) traverse the membrane as a helical segment. At 95–144 (LKPGVGLDLSHLAKKDIHELSGYTDKVVDFKQMILDIIPTNIIDVMARND) the chain is on the extracellular side. A helical membrane pass occupies residues 145–165 (LLAVIFFAILFGVAAAGIGKA). Over 166–182 (SEPVMKFFESTAQIMFK) the chain is Cytoplasmic. The helical transmembrane segment at 183 to 203 (LTQIVMVTAPIGVLALMAASV) threads the bilayer. The Extracellular segment spans residues 204–219 (GQYGIELLLPMFKLVG). A helical membrane pass occupies residues 220 to 240 (TVFLGLFLILFVLFPLVGLIF). Residue Gln241 is a topological domain, cytoplasmic. A helical transmembrane segment spans residues 242–262 (IKYFEVLKMIWDLFLIAFSTT). Topologically, residues 263-300 (STETILPQLMDRMEKYGCPKRVVSFVVPSGLSLNCDGS) are extracellular. A helical transmembrane segment spans residues 301–321 (SLYLSVSCIFLAQAFQVDMTL). Residues 322–324 (SQQ) are Cytoplasmic-facing. The next 2 membrane-spanning stretches (helical) occupy residues 325-345 (LLMM…PSGS) and 346-366 (LVVL…VAII). Residues 367–414 (AGVDRVMDMARTGVNVPGHAIACIVVSKWEKAFRQKEWVSANSQTESI) lie on the Cytoplasmic side of the membrane.

This sequence belongs to the dicarboxylate/amino acid:cation symporter (DAACS) (TC 2.A.23) family.

The protein localises to the cell membrane. With respect to regulation, glutamate uptake is inhibited by beta-hydroxyaspartate and cysteic acid. Catalyzes the proton-dependent, binding-protein-independent transport of glutamate and aspartate. This is Proton/glutamate-aspartate symporter from Bacillus subtilis (strain 168).